A 175-amino-acid chain; its full sequence is Bifunctional protein PyrR (175 aa).

Substrate is bound by residues 40–41 (TR), Arg85, 102–110 (DDVLYTGRT), Arg135, and Val159. The short motif at 98–110 (VIIIDDVLYTGRT) is the PRPP-binding element.

The protein belongs to the purine/pyrimidine phosphoribosyltransferase family. PyrR subfamily. Homodimer and homohexamer; in equilibrium.

The enzyme catalyses UMP + diphosphate = 5-phospho-alpha-D-ribose 1-diphosphate + uracil. Regulates transcriptional attenuation of the pyrimidine nucleotide (pyr) operon by binding in a uridine-dependent manner to specific sites on pyr mRNA. This disrupts an antiterminator hairpin in the RNA and favors formation of a downstream transcription terminator, leading to a reduced expression of downstream genes. Functionally, also displays a weak uracil phosphoribosyltransferase activity which is not physiologically significant. This is Bifunctional protein PyrR from Staphylococcus saprophyticus subsp. saprophyticus (strain ATCC 15305 / DSM 20229 / NCIMB 8711 / NCTC 7292 / S-41).